A 161-amino-acid chain; its full sequence is Large-conductance mechanosensitive channel (161 aa).

The next 2 helical transmembrane spans lie at 14 to 34 and 85 to 105; these read VVDMAVGIIVGGAFGSIVNTL and GLFLNALVSFTIMAFSVFILV.

Belongs to the MscL family. In terms of assembly, homopentamer.

It is found in the cell inner membrane. Channel that opens in response to stretch forces in the membrane lipid bilayer. May participate in the regulation of osmotic pressure changes within the cell. This chain is Large-conductance mechanosensitive channel, found in Chlorobium luteolum (strain DSM 273 / BCRC 81028 / 2530) (Pelodictyon luteolum).